The following is a 369-amino-acid chain: Histidinol-phosphate aminotransferase 2 (369 aa).

An N6-(pyridoxal phosphate)lysine modification is found at K227.

It belongs to the class-II pyridoxal-phosphate-dependent aminotransferase family. Histidinol-phosphate aminotransferase subfamily. In terms of assembly, homodimer. It depends on pyridoxal 5'-phosphate as a cofactor.

The catalysed reaction is L-histidinol phosphate + 2-oxoglutarate = 3-(imidazol-4-yl)-2-oxopropyl phosphate + L-glutamate. Its pathway is amino-acid biosynthesis; L-histidine biosynthesis; L-histidine from 5-phospho-alpha-D-ribose 1-diphosphate: step 7/9. The protein is Histidinol-phosphate aminotransferase 2 (hisC2) of Mesorhizobium japonicum (strain LMG 29417 / CECT 9101 / MAFF 303099) (Mesorhizobium loti (strain MAFF 303099)).